Reading from the N-terminus, the 396-residue chain is Succinyl-CoA:mesaconate CoA-transferase (396 aa).

Residue Asp175 is the Nucleophile of the active site.

Belongs to the CoA-transferase III family.

The catalysed reaction is mesaconate + succinyl-CoA = 2-methylfumaryl-CoA + succinate. Functionally, involved in the methylaspartate cycle. Catalyzes the transfer of the CoA moiety from succinyl-CoA to mesaconate to generate mesaconyl-CoA (2-methylfumaryl-CoA) and succinate. The sequence is that of Succinyl-CoA:mesaconate CoA-transferase from Haloarcula marismortui (strain ATCC 43049 / DSM 3752 / JCM 8966 / VKM B-1809) (Halobacterium marismortui).